The chain runs to 145 residues: UPF0735 ACT domain-containing protein CPE1414 (145 aa).

In terms of domain architecture, ACT spans 69 to 144; that stretch reads IFNMVVTHEK…GVEKVEFVAM (76 aa).

The protein belongs to the UPF0735 family.

In Clostridium perfringens (strain 13 / Type A), this protein is UPF0735 ACT domain-containing protein CPE1414.